The following is a 308-amino-acid chain: Phenylcoumaran benzylic ether reductase TP7 (308 aa).

NADP(+)-binding positions include 11-17, arginine 36, and lysine 45; that span reads GGTGYIG. The active-site Proton acceptor is lysine 133. Residue arginine 137 participates in NADP(+) binding.

The protein belongs to the NmrA-type oxidoreductase family. Isoflavone reductase subfamily. Expressed in flowers. Expressed at low levels in stems.

It carries out the reaction (-)-dehydrodiconiferyl alcohol + NADPH + H(+) = (S)-isodihydrodehydrodiconiferyl alcohol + NADP(+). It catalyses the reaction (+)-dehydrodiconiferyl alcohol + NADPH + H(+) = (R)-isodihydrodehydrodiconiferyl alcohol + NADP(+). The catalysed reaction is (2R,3S)-dihydrodehydrodiconiferyl alcohol + NADPH + H(+) = (S)-tetrahydrodehydrodiconiferyl alcohol + NADP(+). The enzyme catalyses (2S,3R)-dihydrodehydrodiconiferyl alcohol + NADPH + H(+) = (R)-tetrahydrodehydrodiconiferyl alcohol + NADP(+). Its function is as follows. Oxidoreductase involved in lignan biosynthesis. Catalyzes the NADPH-dependent reduction of phenylcoumaran benzylic ethers. Converts dehydrodiconiferyl alcohol (DDC) to isodihydrodehydrodiconiferyl alcohol (IDDDC), and dihydrodehydrodiconiferyl alcohol (DDDC) to tetrahydrodehydrodiconiferyl alcohol (TDDC). This Nicotiana tabacum (Common tobacco) protein is Phenylcoumaran benzylic ether reductase TP7.